The primary structure comprises 145 residues: MDHYLKKLQDIYTKLEGHPFLFSPSKTNEKEFITLLNQALASTQLYRSIQQLFLTMYKLDPIGFINYIKTSKQEYLCLLINPKLVTKFLKITSFKIYINFRLKTFYISPNKYNNFYTAPSEEKTNHLLKEEKTWAKIVEEGGEES.

The protein belongs to the asfivirus K145R family.

Its subcellular location is the virion. This is an uncharacterized protein from Ornithodoros (relapsing fever ticks).